The following is a 391-amino-acid chain: uncharacterized protein (391 aa).

Belongs to the mimivirus L17x/L18x family.

This is an uncharacterized protein from Acanthamoeba polyphaga (Amoeba).